A 199-amino-acid chain; its full sequence is Phosphoheptose isomerase (199 aa).

The SIS domain occupies methionine 36 to aspartate 198. Residue asparagine 51 to glycine 53 participates in substrate binding. Residues histidine 60 and glutamate 64 each contribute to the Zn(2+) site. Substrate-binding positions include glutamate 64, asparagine 93 to aspartate 94, serine 119 to serine 121, serine 124, and glutamine 174. Positions 174 and 182 each coordinate Zn(2+).

Belongs to the SIS family. GmhA subfamily. As to quaternary structure, homotetramer. Requires Zn(2+) as cofactor.

It is found in the cytoplasm. It catalyses the reaction 2 D-sedoheptulose 7-phosphate = D-glycero-alpha-D-manno-heptose 7-phosphate + D-glycero-beta-D-manno-heptose 7-phosphate. The protein operates within carbohydrate biosynthesis; D-glycero-D-manno-heptose 7-phosphate biosynthesis; D-glycero-alpha-D-manno-heptose 7-phosphate and D-glycero-beta-D-manno-heptose 7-phosphate from sedoheptulose 7-phosphate: step 1/1. Its function is as follows. Catalyzes the isomerization of sedoheptulose 7-phosphate in D-glycero-D-manno-heptose 7-phosphate. The sequence is that of Phosphoheptose isomerase from Coxiella burnetii (strain RSA 331 / Henzerling II).